The chain runs to 1088 residues: Probable cellulose synthase A catalytic subunit 9 [UDP-forming] (1088 aa).

Methionine 1 carries the N-acetylmethionine modification. Residues 1 to 283 (MNTGGRLIAG…RSSRINPYRM (283 aa)) lie on the Cytoplasmic side of the membrane. Positions 39, 42, 58, 61, 66, 69, 81, and 84 each coordinate Zn(2+). Residues 39–85 (CKICRDEIELTDNGEPFIACNECAFPTCRPCYEYERREGNQACPQCG) form an RING-type; degenerate zinc finger. The chain crosses the membrane as a helical span at residues 284–304 (LIFCRLAILGLFFHYRILHPV). Residues 305–306 (ND) are Extracellular-facing. Residues 307 to 327 (AFGLWLTSVICEIWFAVSWIL) form a helical membrane-spanning segment. The Cytoplasmic portion of the chain corresponds to 328–871 (DQFPKWYPIE…INSVVYPWTS (544 aa)). 5 residues coordinate UDP-alpha-D-glucose: serine 366, lysine 372, glutamate 373, aspartate 402, and lysine 543. Aspartate 402 is an active-site residue. Positions 544 and 568 each coordinate Mn(2+). Aspartate 788 is an active-site residue. Residues 872-892 (LPLLVYCSLPAICLLTGKFIV) traverse the membrane as a helical segment. The Extracellular portion of the chain corresponds to 893–897 (PEISN). A helical transmembrane segment spans residues 898 to 918 (YAGILFLLMFMSIAVTGILEM). Residues 919 to 933 (QWGKIGIDDWWRNEQ) lie on the Cytoplasmic side of the membrane. Residues 934–954 (FWVIGGVSSHLFALFQGLLKV) form a helical membrane-spanning segment. Residues 955–983 (LAGVSTNFTVTSKAADDGEFSELYIFKWT) are Extracellular-facing. N-linked (GlcNAc...) asparagine glycosylation occurs at asparagine 961. The helical transmembrane segment at 984–1004 (SLLIPPTTLLIINIVGVIVGV) threads the bilayer. The Cytoplasmic segment spans residues 1005–1015 (SDAINNGYDSW). A helical transmembrane segment spans residues 1016–1036 (GPLFGRLFFALWVIVHLYPFL). The Extracellular segment spans residues 1037-1045 (KGLLGKQDR). Residues 1046–1066 (VPTIILVWSILLASILTLLWV) form a helical membrane-spanning segment. The Cytoplasmic portion of the chain corresponds to 1067–1088 (RVNPFVSKDGPVLEICGLDCLK).

The protein belongs to the glycosyltransferase 2 family. Plant cellulose synthase subfamily. Requires Mn(2+) as cofactor. Zn(2+) serves as cofactor. As to expression, expressed in young plants, stems and flowers.

It is found in the cell membrane. It carries out the reaction [(1-&gt;4)-beta-D-glucosyl](n) + UDP-alpha-D-glucose = [(1-&gt;4)-beta-D-glucosyl](n+1) + UDP + H(+). Its pathway is glycan metabolism; plant cellulose biosynthesis. Its function is as follows. Probable catalytic subunit of cellulose synthase terminal complexes ('rosettes'), required for beta-1,4-glucan microfibril crystallization, a major mechanism of the cell wall formation. This chain is Probable cellulose synthase A catalytic subunit 9 [UDP-forming], found in Arabidopsis thaliana (Mouse-ear cress).